The sequence spans 226 residues: NAD(P)H-quinone oxidoreductase subunit K, chloroplastic (226 aa).

The [4Fe-4S] cluster site is built by Cys-43, Cys-44, Cys-108, and Cys-139.

It belongs to the complex I 20 kDa subunit family. As to quaternary structure, NDH is composed of at least 16 different subunits, 5 of which are encoded in the nucleus. The cofactor is [4Fe-4S] cluster.

It localises to the plastid. The protein resides in the chloroplast thylakoid membrane. It carries out the reaction a plastoquinone + NADH + (n+1) H(+)(in) = a plastoquinol + NAD(+) + n H(+)(out). It catalyses the reaction a plastoquinone + NADPH + (n+1) H(+)(in) = a plastoquinol + NADP(+) + n H(+)(out). In terms of biological role, NDH shuttles electrons from NAD(P)H:plastoquinone, via FMN and iron-sulfur (Fe-S) centers, to quinones in the photosynthetic chain and possibly in a chloroplast respiratory chain. The immediate electron acceptor for the enzyme in this species is believed to be plastoquinone. Couples the redox reaction to proton translocation, and thus conserves the redox energy in a proton gradient. The protein is NAD(P)H-quinone oxidoreductase subunit K, chloroplastic of Lupinus luteus (European yellow lupine).